A 178-amino-acid polypeptide reads, in one-letter code: Cytochrome c-type biogenesis protein CcmE (178 aa).

Residues 1-8 are Cytoplasmic-facing; that stretch reads MNPRRKKR. Residues 9–29 form a helical; Signal-anchor for type II membrane protein membrane-spanning segment; that stretch reads LAIVGSILIGIGVVSGLVLYA. Topologically, residues 30–178 are periplasmic; it reads LSQNIDLFFT…QLESKKTNSY (149 aa). Positions 143 and 147 each coordinate heme. The segment at 154–178 is disordered; the sequence is EAAGQKHDKATYSDKQLESKKTNSY. Residues 157 to 178 show a composition bias toward basic and acidic residues; sequence GQKHDKATYSDKQLESKKTNSY.

The protein belongs to the CcmE/CycJ family.

Its subcellular location is the cell inner membrane. Functionally, heme chaperone required for the biogenesis of c-type cytochromes. Transiently binds heme delivered by CcmC and transfers the heme to apo-cytochromes in a process facilitated by CcmF and CcmH. The protein is Cytochrome c-type biogenesis protein CcmE of Colwellia psychrerythraea (strain 34H / ATCC BAA-681) (Vibrio psychroerythus).